Here is a 230-residue protein sequence, read N- to C-terminus: Cytochrome c oxidase subunit 2 (230 aa).

The Mitochondrial intermembrane portion of the chain corresponds to 1-14 (MAHPAQLGFQDAAS). Residues 15-45 (PVMEELLCFHDHALMIVFLISTLVLYIIIAM) traverse the membrane as a helical segment. Residues 46–59 (VSTKLTNKFILDSQ) are Mitochondrial matrix-facing. The chain crosses the membrane as a helical span at residues 60–87 (EIEIVWTVLPAIILILIALPSLRILYLM). At 88 to 230 (DEINDPHVTI…NWSSAMLEDA (143 aa)) the chain is on the mitochondrial intermembrane side. His-161, Cys-196, Glu-198, Cys-200, His-204, and Met-207 together coordinate Cu cation. Glu-198 contacts Mg(2+).

The protein belongs to the cytochrome c oxidase subunit 2 family. Component of the cytochrome c oxidase (complex IV, CIV), a multisubunit enzyme composed of 14 subunits. The complex is composed of a catalytic core of 3 subunits MT-CO1, MT-CO2 and MT-CO3, encoded in the mitochondrial DNA, and 11 supernumerary subunits COX4I, COX5A, COX5B, COX6A, COX6B, COX6C, COX7A, COX7B, COX7C, COX8 and NDUFA4, which are encoded in the nuclear genome. The complex exists as a monomer or a dimer and forms supercomplexes (SCs) in the inner mitochondrial membrane with NADH-ubiquinone oxidoreductase (complex I, CI) and ubiquinol-cytochrome c oxidoreductase (cytochrome b-c1 complex, complex III, CIII), resulting in different assemblies (supercomplex SCI(1)III(2)IV(1) and megacomplex MCI(2)III(2)IV(2)). Found in a complex with TMEM177, COA6, COX18, COX20, SCO1 and SCO2. Interacts with TMEM177 in a COX20-dependent manner. Interacts with COX20. Interacts with COX16. The cofactor is Cu cation.

It localises to the mitochondrion inner membrane. It carries out the reaction 4 Fe(II)-[cytochrome c] + O2 + 8 H(+)(in) = 4 Fe(III)-[cytochrome c] + 2 H2O + 4 H(+)(out). Its function is as follows. Component of the cytochrome c oxidase, the last enzyme in the mitochondrial electron transport chain which drives oxidative phosphorylation. The respiratory chain contains 3 multisubunit complexes succinate dehydrogenase (complex II, CII), ubiquinol-cytochrome c oxidoreductase (cytochrome b-c1 complex, complex III, CIII) and cytochrome c oxidase (complex IV, CIV), that cooperate to transfer electrons derived from NADH and succinate to molecular oxygen, creating an electrochemical gradient over the inner membrane that drives transmembrane transport and the ATP synthase. Cytochrome c oxidase is the component of the respiratory chain that catalyzes the reduction of oxygen to water. Electrons originating from reduced cytochrome c in the intermembrane space (IMS) are transferred via the dinuclear copper A center (CU(A)) of subunit 2 and heme A of subunit 1 to the active site in subunit 1, a binuclear center (BNC) formed by heme A3 and copper B (CU(B)). The BNC reduces molecular oxygen to 2 water molecules using 4 electrons from cytochrome c in the IMS and 4 protons from the mitochondrial matrix. The chain is Cytochrome c oxidase subunit 2 (mt-co2) from Danio rerio (Zebrafish).